The following is an 814-amino-acid chain: Protein ADP-ribosyltransferase PARP3 (814 aa).

2 stretches are compositionally biased toward basic and acidic residues: residues 1 to 19 and 27 to 48; these read MKVHETRSHAHMSGDEQKG and EGKLPESEQSQKKAKPENDDGR. Residues 1–52 are disordered; the sequence is MKVHETRSHAHMSGDEQKGNLRKHKAEGKLPESEQSQKKAKPENDDGRSVNG. The PADR1 zinc-binding domain occupies 38–186; that stretch reads KKAKPENDDG…KRELGSADKP (149 aa). Residues 105–150 are zinc ribbon; it reads GALAKCPLCGGTLICDNEKRFVCGGEISEWCSCVFSTKDPPRKEEP. Zn(2+) contacts are provided by Cys-110, Cys-113, Cys-127, and Cys-137. TPR repeat units lie at residues 182 to 215 and 277 to 310; these read SADKPFVGMMISLMGRLTRTHQYWKKKIERNGGK and DLSVEGKGIPWDKQDPSEEAIESFSAELKMYGKR. Positions 187–274 constitute a BRCT domain; sequence FVGMMISLMG…EAQPLEAYDV (88 aa). In terms of domain architecture, WGR spans 322–422; sequence GGKIFEKDGL…KKIQKKPHKF (101 aa). The 120-residue stretch at 449–568 folds into the PARP alpha-helical domain; the sequence is HCKLDSFVAN…DINTASRLIG (120 aa). One can recognise a PARP catalytic domain in the interval 577 to 808; that stretch reads DPLSDRYKKL…VKYEEKGTEI (232 aa).

This sequence belongs to the ARTD/PARP family.

It localises to the nucleus. It catalyses the reaction L-aspartyl-[protein] + NAD(+) = 4-O-(ADP-D-ribosyl)-L-aspartyl-[protein] + nicotinamide. The enzyme catalyses L-glutamyl-[protein] + NAD(+) = 5-O-(ADP-D-ribosyl)-L-glutamyl-[protein] + nicotinamide. In terms of biological role, involved in the base excision repair (BER) pathway, by catalyzing the poly(ADP-ribosyl)ation of a limited number of acceptor proteins involved in chromatin architecture and in DNA metabolism. This modification follows DNA damages and appears as an obligatory step in a detection/signaling pathway leading to the reparation of DNA strand breaks. This is Protein ADP-ribosyltransferase PARP3 (PARP3) from Arabidopsis thaliana (Mouse-ear cress).